We begin with the raw amino-acid sequence, 138 residues long: Ostreolysin A6 (138 aa).

The protein belongs to the aegerolysin family. Monomer.

Functionally, has hemolytic activity against bovine erythrocytes at nanomolar concentrations in vitro. Promotes active pleurotolysin B (PlyB)-dependent permeabilization of membranes rich in cholesterol and sphingomyelin. May play an important role in the initial phase of fungal fruiting. This Pleurotus ostreatus (Oyster mushroom) protein is Ostreolysin A6 (OlyA6).